The sequence spans 174 residues: RNA pyrophosphohydrolase (174 aa).

Residues glycine 6–lysine 149 form the Nudix hydrolase domain. The short motif at glycine 38 to glycine 59 is the Nudix box element.

The protein belongs to the Nudix hydrolase family. RppH subfamily. The cofactor is a divalent metal cation.

Its function is as follows. Accelerates the degradation of transcripts by removing pyrophosphate from the 5'-end of triphosphorylated RNA, leading to a more labile monophosphorylated state that can stimulate subsequent ribonuclease cleavage. This chain is RNA pyrophosphohydrolase, found in Neisseria meningitidis serogroup A / serotype 4A (strain DSM 15465 / Z2491).